Reading from the N-terminus, the 509-residue chain is MAINPSLLFLSLLFLFNGCLARQTFSSQQSQNECQINRLRASAPQTRIRSEAGTTEWWNPNCQQLRCAGVSVMRQTIEPNGLVLPSFTNAPQLLYIVQGRGIQGIVMPGCAETFQDSQQWQHQSRGRFQDQHQKVRRFRQGDIIALPQGVVHWSYNDGNERVVTINLLDTGNSANQLDNIPRRFHLAGNPEEEQRQLRRLAQQMQGRSERGEESEEEEGEGEEEEEEDNPSRRSRHQEEEEQGRESSSCNNLLCAFDRNFLAQAFNVDHDIIRKIQRVRGNRGTIIRVRDRLQVVTPPRMEEEEREERQQEQRYRHTRGGSQDNGLEETFCSMRIKENLADPERADIFNPQAGRISTLNRFNLPILQRLELSAERGVLYNRAGLIPQWNVNAHKILYMLRGCARVQVVNHNGDAVFDDNVEQGQLLTVPQNFAFMKQAGNEGAEWISFFTNSEATNTPMAGSVSFMRALPEEVVAASYQVSREDARRIKFNNKNTFFFTPSQSERRADA.

Residues Met1–Ala21 form the signal peptide. Disulfide bonds link Cys34–Cys67 and Cys110–Cys331. Residues Leu39–Arg273 enclose the Cupin type-1 1 domain. 2 disordered regions span residues Ala187–Ser248 and Pro298–Gly325. The span at Glu212–Asp228 shows a compositional bias: acidic residues. Basic and acidic residues predominate over residues Arg299–Tyr314. In terms of domain architecture, Cupin type-1 2 spans Glu337–Arg486.

Belongs to the 11S seed storage protein (globulins) family. Hexamer; each subunit is composed of an acidic and a basic chain derived from a single precursor and linked by a disulfide bond.

In terms of biological role, this is a seed storage protein. The protein is Legumin A (LEGA) of Gossypium hirsutum (Upland cotton).